Consider the following 918-residue polypeptide: Serine/threonine-protein kinase D1 (918 aa).

Tyrosine 93 is modified (phosphotyrosine). The Phorbol-ester/DAG-type 1 zinc-finger motif lies at 144–194 (PHALFVHSYRAPAFCDHCGEMLWGLVRQGLKCEGCGLNYHKRCAFKIPNNC). Residues serine 203, serine 206, serine 217, and serine 221 each carry the phosphoserine modification. A Phorbol-ester/DAG-type 2 zinc finger spans residues 276–326 (PHTFVIHSYTRPTVCQFCKKLLKGLFRQGLQCKDCRFNCHKRCAPKVPNNC). Disordered regions lie at residues 338–362 (SPGA…NSGL) and 380–408 (EGQS…STSN). Composition is skewed to acidic residues over residues 345 to 355 (VVMEEGSDDND) and 387 to 396 (EMQDPDADQE). At serine 351 the chain carries Phosphoserine. Phosphoserine; by MAPK13 is present on residues serine 403 and serine 407. Residues 428-547 (TVMKEGWMVH…WEVAIQHALM (120 aa)) enclose the PH domain. Position 438 is a phosphotyrosine (tyrosine 438). Position 454 is a phosphoserine (serine 454). Tyrosine 469 carries the post-translational modification Phosphotyrosine; by ABL. Tyrosine 508 carries the post-translational modification Phosphotyrosine. Serine 554 bears the Phosphoserine mark. The Protein kinase domain occupies 589–845 (IFPDEVLGSG…VDKTLSHPWL (257 aa)). ATP is bound by residues 595-603 (LGSGQFGIV) and lysine 618. Catalysis depends on aspartate 712, which acts as the Proton acceptor. Residue serine 744 is modified to Phosphoserine; by PKC/PRKCD. A Phosphoserine; by autocatalysis and PKC/PRKCD modification is found at serine 748. Tyrosine 755 carries the post-translational modification Phosphotyrosine. Serine 916 is subject to Phosphoserine; by autocatalysis.

This sequence belongs to the protein kinase superfamily. CAMK Ser/Thr protein kinase family. PKD subfamily. In terms of assembly, interacts (via N-terminus) with ADAP1/CENTA1. Interacts with MAPK13. Interacts with DAPK1 in an oxidative stress-regulated manner. Interacts with USP28; the interaction induces phosphorylation of USP28 and activated KRAS-mediated stabilization of ZNF304. Interacts with AKAP13 (via C-terminal domain). Mg(2+) is required as a cofactor. In terms of processing, phosphorylated at Ser-403 and Ser-407 by MAPK13 during regulation of insulin secretion in pancreatic beta cells. Phosphorylated by DAPK1. Phosphorylated at Tyr-93 and by ABL at Tyr-469, which primes the kinase in response to oxidative stress, and promotes a second step activating phosphorylation at Ser-744/Ser-748 by PKRD. Phosphorylated on Ser-916 upon S.enterica infection in macrophages.

The protein resides in the cytoplasm. It localises to the cell membrane. The protein localises to the golgi apparatus. It is found in the trans-Golgi network. The catalysed reaction is L-seryl-[protein] + ATP = O-phospho-L-seryl-[protein] + ADP + H(+). The enzyme catalyses L-threonyl-[protein] + ATP = O-phospho-L-threonyl-[protein] + ADP + H(+). Its activity is regulated as follows. Activated by DAG and phorbol esters. Phorbol-ester/DAG-type domain 1 binds DAG with high affinity and appears to play the dominant role in mediating translocation to the cell membrane and trans-Golgi network. Phorbol-ester/DAG-type domain 2 binds phorbol ester with higher affinity. Autophosphorylation of Ser-748 and phosphorylation of Ser-744 by PKC relieves auto-inhibition by the PH domain. Phosphorylation on Tyr-469 by the SRC-ABL1 pathway in response to oxidative stress, is also required for activation. Activated by DAPK1 under oxidative stress. In terms of biological role, serine/threonine-protein kinase that converts transient diacylglycerol (DAG) signals into prolonged physiological effects downstream of PKC, and is involved in the regulation of MAPK8/JNK1 and Ras signaling, Golgi membrane integrity and trafficking, cell survival through NF-kappa-B activation, cell migration, cell differentiation by mediating HDAC7 nuclear export, cell proliferation via MAPK1/3 (ERK1/2) signaling, and plays a role in cardiac hypertrophy, VEGFA-induced angiogenesis, genotoxic-induced apoptosis and flagellin-stimulated inflammatory response. Phosphorylates the epidermal growth factor receptor (EGFR) on dual threonine residues, which leads to the suppression of epidermal growth factor (EGF)-induced MAPK8/JNK1 activation and subsequent JUN phosphorylation. Phosphorylates RIN1, inducing RIN1 binding to 14-3-3 proteins YWHAB, YWHAE and YWHAZ and increased competition with RAF1 for binding to GTP-bound form of Ras proteins (NRAS, HRAS and KRAS). Acts downstream of the heterotrimeric G-protein beta/gamma-subunit complex to maintain the structural integrity of the Golgi membranes, and is required for protein transport along the secretory pathway. In the trans-Golgi network (TGN), regulates the fission of transport vesicles that are on their way to the plasma membrane. May act by activating the lipid kinase phosphatidylinositol 4-kinase beta (PI4KB) at the TGN for the local synthesis of phosphorylated inositol lipids, which induces a sequential production of DAG, phosphatidic acid (PA) and lyso-PA (LPA) that are necessary for membrane fission and generation of specific transport carriers to the cell surface. Under oxidative stress, is phosphorylated at Tyr-469 via SRC-ABL1 and contributes to cell survival by activating IKK complex and subsequent nuclear translocation and activation of NFKB1. Involved in cell migration by regulating integrin alpha-5/beta-3 recycling and promoting its recruitment in newly forming focal adhesion. In osteoblast differentiation, mediates the bone morphogenetic protein 2 (BMP2)-induced nuclear export of HDAC7, which results in the inhibition of HDAC7 transcriptional repression of RUNX2. In neurons, plays an important role in neuronal polarity by regulating the biogenesis of TGN-derived dendritic vesicles, and is involved in the maintenance of dendritic arborization and Golgi structure in hippocampal cells. May potentiate mitogenesis induced by the neuropeptide bombesin or vasopressin by mediating an increase in the duration of MAPK1/3 (ERK1/2) signaling, which leads to accumulation of immediate-early gene products including FOS that stimulate cell cycle progression. Plays an important role in the proliferative response induced by low calcium in keratinocytes, through sustained activation of MAPK1/3 (ERK1/2) pathway. Downstream of novel PKC signaling, plays a role in cardiac hypertrophy by phosphorylating HDAC5, which in turn triggers XPO1/CRM1-dependent nuclear export of HDAC5, MEF2A transcriptional activation and induction of downstream target genes that promote myocyte hypertrophy and pathological cardiac remodeling. Mediates cardiac troponin I (TNNI3) phosphorylation at the PKA sites, which results in reduced myofilament calcium sensitivity, and accelerated crossbridge cycling kinetics. The PRKD1-HDAC5 pathway is also involved in angiogenesis by mediating VEGFA-induced specific subset of gene expression, cell migration, and tube formation. In response to VEGFA, is necessary and required for HDAC7 phosphorylation which induces HDAC7 nuclear export and endothelial cell proliferation and migration. During apoptosis induced by cytarabine and other genotoxic agents, PRKD1 is cleaved by caspase-3 at Asp-378, resulting in activation of its kinase function and increased sensitivity of cells to the cytotoxic effects of genotoxic agents. In epithelial cells, is required for transducing flagellin-stimulated inflammatory responses by binding and phosphorylating TLR5, which contributes to MAPK14/p38 activation and production of inflammatory cytokines. Acts as an activator of NLRP3 inflammasome assembly by mediating phosphorylation of NLRP3. May play a role in inflammatory response by mediating activation of NF-kappa-B. May be involved in pain transmission by directly modulating TRPV1 receptor. Plays a role in activated KRAS-mediated stabilization of ZNF304 in colorectal cancer (CRC) cells. Regulates nuclear translocation of transcription factor TFEB in macrophages upon live S.enterica infection. The protein is Serine/threonine-protein kinase D1 (Prkd1) of Rattus norvegicus (Rat).